We begin with the raw amino-acid sequence, 512 residues long: Probable ubiquitin carboxyl-terminal hydrolase 3 (512 aa).

The tract at residues 64 to 109 is disordered; the sequence is TSKTKESEKSPKSWSAIAKKHVQGDSPVKKSHSVPVPSDRSEKKSF. Residues 133-511 form the USP domain; it reads RGFINTGNIC…VAYLLFYTRR (379 aa). Cys142 (nucleophile) is an active-site residue. His453 acts as the Proton acceptor in catalysis.

This sequence belongs to the peptidase C19 family.

The enzyme catalyses Thiol-dependent hydrolysis of ester, thioester, amide, peptide and isopeptide bonds formed by the C-terminal Gly of ubiquitin (a 76-residue protein attached to proteins as an intracellular targeting signal).. The polypeptide is Probable ubiquitin carboxyl-terminal hydrolase 3 (ubp3) (Schizosaccharomyces pombe (strain 972 / ATCC 24843) (Fission yeast)).